We begin with the raw amino-acid sequence, 66 residues long: Large ribosomal subunit protein bL35 (66 aa).

The segment at 1-22 (MAYKLKSHRGAAKRFKKTASGG) is disordered.

This sequence belongs to the bacterial ribosomal protein bL35 family.

This Pseudoalteromonas translucida (strain TAC 125) protein is Large ribosomal subunit protein bL35.